A 482-amino-acid chain; its full sequence is MKFIIKLFPEITIKSQSVRLRFIKILTGNIRNVLKHYDETLAVVRHWDNIEVRAKDENQRLTIRDALTRIPGIHHILEVEDVPFTDMHDIFEKALVQYRDQLEGKTFCVRVKRSGKHDFSSIDVERYVGGGLNQHIESARVKLTNPDVTVHLEVEDDRLLLIKGRYEGIGGFPIGTQEDVLSLISGGFDSGVSSYMLMRRGCRVHYCFFNLGGAAHEIGVRQVAHYLWNRFGSSHRVRFVAINFEPVVGEILEKIDDGQMGVILKRMMVRAASKVAERYGVQALVTGEALGQVSSQTLTNLRLIDNVSDTLILRPLISYDKEHIINLARQIGTEDFARTMPEYCGVISKSPTVKAVKSKIEAEEEKFDFSILDKVVEEANNVDIREIAQQTEQEVVEVETVNDCGPNDVILDIRSVDEQEDKPLKVEGIDVVSLPFYKLSTKFGDLDQNRTWLLWCERGVMSRLQALYLREQGFNNVKVYRP.

The region spanning 61–165 (LTIRDALTRI…DDRLLLIKGR (105 aa)) is the THUMP domain. Residues 183–184 (LI), lysine 265, glycine 287, and glutamine 296 contribute to the ATP site. Cysteine 344 and cysteine 456 are joined by a disulfide. The Rhodanese domain occupies 404-482 (CGPNDVILDI…GFNNVKVYRP (79 aa)). The active-site Cysteine persulfide intermediate is cysteine 456.

Belongs to the ThiI family.

It localises to the cytoplasm. The catalysed reaction is [ThiI sulfur-carrier protein]-S-sulfanyl-L-cysteine + a uridine in tRNA + 2 reduced [2Fe-2S]-[ferredoxin] + ATP + H(+) = [ThiI sulfur-carrier protein]-L-cysteine + a 4-thiouridine in tRNA + 2 oxidized [2Fe-2S]-[ferredoxin] + AMP + diphosphate. It carries out the reaction [ThiS sulfur-carrier protein]-C-terminal Gly-Gly-AMP + S-sulfanyl-L-cysteinyl-[cysteine desulfurase] + AH2 = [ThiS sulfur-carrier protein]-C-terminal-Gly-aminoethanethioate + L-cysteinyl-[cysteine desulfurase] + A + AMP + 2 H(+). The protein operates within cofactor biosynthesis; thiamine diphosphate biosynthesis. In terms of biological role, catalyzes the ATP-dependent transfer of a sulfur to tRNA to produce 4-thiouridine in position 8 of tRNAs, which functions as a near-UV photosensor. Also catalyzes the transfer of sulfur to the sulfur carrier protein ThiS, forming ThiS-thiocarboxylate. This is a step in the synthesis of thiazole, in the thiamine biosynthesis pathway. The sulfur is donated as persulfide by IscS. This is tRNA sulfurtransferase from Shigella dysenteriae serotype 1 (strain Sd197).